Reading from the N-terminus, the 309-residue chain is Ribokinase (309 aa).

Substrate is bound by residues 14–16 (NAD), 42–46 (GKGAN), and Glu-143. ATP-binding positions include Asn-187 and 223–228 (TLGSRG). K(+) contacts are provided by Asp-249 and Ile-251. ATP contacts are provided by residues 254–255 (GD) and His-279. A substrate-binding site is contributed by Asp-255. Catalysis depends on Asp-255, which acts as the Proton acceptor. Residues Ala-285, Arg-288, Gly-290, and Ser-294 each coordinate K(+).

This sequence belongs to the carbohydrate kinase PfkB family. Ribokinase subfamily. In terms of assembly, homodimer. Mg(2+) serves as cofactor.

It is found in the cytoplasm. It catalyses the reaction D-ribose + ATP = D-ribose 5-phosphate + ADP + H(+). The protein operates within carbohydrate metabolism; D-ribose degradation; D-ribose 5-phosphate from beta-D-ribopyranose: step 2/2. Activated by a monovalent cation that binds near, but not in, the active site. The most likely occupant of the site in vivo is potassium. Ion binding induces a conformational change that may alter substrate affinity. Catalyzes the phosphorylation of ribose at O-5 in a reaction requiring ATP and magnesium. The resulting D-ribose-5-phosphate can then be used either for sythesis of nucleotides, histidine, and tryptophan, or as a component of the pentose phosphate pathway. This Escherichia coli O157:H7 protein is Ribokinase.